We begin with the raw amino-acid sequence, 61 residues long: Small ribosomal subunit protein uS14 (61 aa).

4 residues coordinate Zn(2+): cysteine 24, cysteine 27, cysteine 40, and cysteine 43.

Belongs to the universal ribosomal protein uS14 family. Zinc-binding uS14 subfamily. Part of the 30S ribosomal subunit. Contacts proteins S3 and S10. Zn(2+) is required as a cofactor.

Functionally, binds 16S rRNA, required for the assembly of 30S particles and may also be responsible for determining the conformation of the 16S rRNA at the A site. The sequence is that of Small ribosomal subunit protein uS14 from Endomicrobium trichonymphae.